Consider the following 786-residue polypeptide: Neprilysin-3 (786 aa).

Topologically, residues 1 to 52 (MTRYKQTEFTEDDSSSIGGIQLNEATGHTGMQIRYHTARATWNWRSRNKTEK) are cytoplasmic. Residues 53–73 (WLLITTFVMAITIFTLLIVLF) form a helical; Signal-anchor for type II membrane protein membrane-spanning segment. Residues 74 to 786 (TDGGSSDATK…MNPTEKCEVW (713 aa)) are Extracellular-facing. One can recognise a Peptidase M13 domain in the interval 102 to 786 (PCLNKHCIFA…MNPTEKCEVW (685 aa)). 5 cysteine pairs are disulfide-bonded: Cys-103–Cys-108, Cys-126–Cys-771, Cys-134–Cys-731, Cys-190–Cys-450, and Cys-659–Cys-783. N-linked (GlcNAc...) asparagine glycosylation is found at Asn-216, Asn-226, Asn-256, Asn-279, Asn-305, Asn-325, Asn-356, Asn-388, Asn-496, and Asn-569. Residue His-622 participates in Zn(2+) binding. Glu-623 is a catalytic residue. Positions 626 and 682 each coordinate Zn(2+). Asp-686 (proton donor) is an active-site residue. Asn-715 is a glycosylation site (N-linked (GlcNAc...) asparagine).

The protein belongs to the peptidase M13 family. The cofactor is Zn(2+).

Its subcellular location is the cell membrane. The catalysed reaction is Preferential cleavage of polypeptides between hydrophobic residues, particularly with Phe or Tyr at P1'.. Metalloendoprotease which is required in the dorsal paired medial neurons for the proper formation of long-term (LTM) and middle-term memories (MTM). Also required in the mushroom body neurons where it functions redundantly with neprilysins Nep2 and Nep4 in normal LTM formation. The sequence is that of Neprilysin-3 from Drosophila melanogaster (Fruit fly).